A 131-amino-acid chain; its full sequence is uncharacterized protein (131 aa).

Residues 60-100 (GRHTLSQVPNKGHEKASAVQLPEKQGTDQSRRGPTSAVTKA) form a disordered region. The span at 91–100 (RGPTSAVTKA) shows a compositional bias: polar residues.

This is an uncharacterized protein from Homo sapiens (Human).